A 314-amino-acid polypeptide reads, in one-letter code: Methenyltetrahydromethanopterin cyclohydrolase (314 aa).

This sequence belongs to the MCH family.

It localises to the cytoplasm. It catalyses the reaction 5,10-methenyl-5,6,7,8-tetrahydromethanopterin + H2O = N(5)-formyl-5,6,7,8-tetrahydromethanopterin + H(+). The protein operates within one-carbon metabolism; methanogenesis from CO(2); 5,10-methenyl-5,6,7,8-tetrahydromethanopterin from CO(2): step 3/3. Its function is as follows. Catalyzes the reversible interconversion of 5-formyl-H(4)MPT to methenyl-H(4)MPT(+). In Methanocorpusculum labreanum (strain ATCC 43576 / DSM 4855 / Z), this protein is Methenyltetrahydromethanopterin cyclohydrolase.